Here is a 193-residue protein sequence, read N- to C-terminus: Large ribosomal subunit protein eL19B (193 aa).

A disordered region spans residues 157 to 179 (EQQDARRARAKAARQRRAKAVEE). The segment covering 164-174 (ARAKAARQRRA) has biased composition (basic residues).

This sequence belongs to the eukaryotic ribosomal protein eL19 family. In terms of assembly, component of the large ribosomal subunit (LSU). Mature yeast ribosomes consist of a small (40S) and a large (60S) subunit. The 40S small subunit contains 1 molecule of ribosomal RNA (18S rRNA) and at least 33 different proteins. The large 60S subunit contains 3 rRNA molecules (25S, 5.8S and 5S rRNA) and at least 46 different proteins. eL19 lies in close proximity to the binding site for eukaryotic initiation factor eIF4G.

It is found in the cytoplasm. Functionally, component of the ribosome, a large ribonucleoprotein complex responsible for the synthesis of proteins in the cell. The small ribosomal subunit (SSU) binds messenger RNAs (mRNAs) and translates the encoded message by selecting cognate aminoacyl-transfer RNA (tRNA) molecules. The large subunit (LSU) contains the ribosomal catalytic site termed the peptidyl transferase center (PTC), which catalyzes the formation of peptide bonds, thereby polymerizing the amino acids delivered by tRNAs into a polypeptide chain. The nascent polypeptides leave the ribosome through a tunnel in the LSU and interact with protein factors that function in enzymatic processing, targeting, and the membrane insertion of nascent chains at the exit of the ribosomal tunnel. eL19 may play a role in the last stages of translation initiation, in particular subunit joining and shedding/releasing factors. The chain is Large ribosomal subunit protein eL19B (rpl1902) from Schizosaccharomyces pombe (strain 972 / ATCC 24843) (Fission yeast).